The primary structure comprises 379 residues: MSGFLPFSRPAMGVEELAAVKEVLESGWITTGPKNQALEQAFCQLTGNQHAIAVSSATAGMHITLMALEIGKGDEVITPSLTWVSTLNMISLLGATPVMVDVDRDTLMVTPEAIEAAITPRTKAIIPVHYAGAPADIDAIRAIGERYGIAVIEDAAHAVGMYYKGRHIGAKGTAIFSFHAIKNITCAEGGLIVTDNENLARQLRMLKFHGLGVDAYDRHTWGRAPQAEVLTPGYKYNLTDINAAIALTQLVKLEHLNTRRREIAQQYQQALAALPFQPLSLPAWPHVHAWHLFIIRVDEQRCGISRDALMEALKERGIGAGLHFRAAHTQKYYRERFPTLSLPNTEWNSERICSLPLFPDMTTADADRVITALKQLAGQ.

K182 is modified (N6-(pyridoxal phosphate)lysine).

The protein belongs to the DegT/DnrJ/EryC1 family. ArnB subfamily. Homodimer. It depends on pyridoxal 5'-phosphate as a cofactor.

It carries out the reaction UDP-4-amino-4-deoxy-beta-L-arabinose + 2-oxoglutarate = UDP-beta-L-threo-pentopyranos-4-ulose + L-glutamate. It functions in the pathway nucleotide-sugar biosynthesis; UDP-4-deoxy-4-formamido-beta-L-arabinose biosynthesis; UDP-4-deoxy-4-formamido-beta-L-arabinose from UDP-alpha-D-glucuronate: step 2/3. Its pathway is bacterial outer membrane biogenesis; lipopolysaccharide biosynthesis. Functionally, catalyzes the conversion of UDP-4-keto-arabinose (UDP-Ara4O) to UDP-4-amino-4-deoxy-L-arabinose (UDP-L-Ara4N). The modified arabinose is attached to lipid A and is required for resistance to polymyxin and cationic antimicrobial peptides. The chain is UDP-4-amino-4-deoxy-L-arabinose--oxoglutarate aminotransferase from Escherichia coli O81 (strain ED1a).